A 172-amino-acid polypeptide reads, in one-letter code: 3-hydroxydecanoyl-[acyl-carrier-protein] dehydratase (172 aa).

The active site involves H71.

Belongs to the thioester dehydratase family. FabA subfamily. In terms of assembly, homodimer.

It is found in the cytoplasm. It catalyses the reaction a (3R)-hydroxyacyl-[ACP] = a (2E)-enoyl-[ACP] + H2O. The catalysed reaction is (3R)-hydroxydecanoyl-[ACP] = (2E)-decenoyl-[ACP] + H2O. The enzyme catalyses (2E)-decenoyl-[ACP] = (3Z)-decenoyl-[ACP]. The protein operates within lipid metabolism; fatty acid biosynthesis. In terms of biological role, necessary for the introduction of cis unsaturation into fatty acids. Catalyzes the dehydration of (3R)-3-hydroxydecanoyl-ACP to E-(2)-decenoyl-ACP and then its isomerization to Z-(3)-decenoyl-ACP. Can catalyze the dehydratase reaction for beta-hydroxyacyl-ACPs with saturated chain lengths up to 16:0, being most active on intermediate chain length. This chain is 3-hydroxydecanoyl-[acyl-carrier-protein] dehydratase, found in Salmonella arizonae (strain ATCC BAA-731 / CDC346-86 / RSK2980).